Reading from the N-terminus, the 289-residue chain is Protease HtpX (289 aa).

Transmembrane regions (helical) follow at residues leucine 7–phenylalanine 27 and glycine 38–methionine 58. Histidine 144 serves as a coordination point for Zn(2+). The active site involves glutamate 145. Histidine 148 contributes to the Zn(2+) binding site. 2 helical membrane-spanning segments follow: residues valine 155–isoleucine 175 and leucine 194–isoleucine 214. Zn(2+) is bound at residue glutamate 223.

The protein belongs to the peptidase M48B family. It depends on Zn(2+) as a cofactor.

The protein localises to the cell inner membrane. This is Protease HtpX from Actinobacillus pleuropneumoniae serotype 5b (strain L20).